A 305-amino-acid chain; its full sequence is Acyl transferase (305 aa).

Residues S116, D213, and H243 each act as charge relay system in the active site.

This sequence belongs to the LuxD family.

The protein operates within lipid metabolism; fatty acid reduction for biolumincescence. Functionally, acyl transferase is part of the fatty acid reductase system required for aldehyde biosynthesis; it produces fatty acids for the luminescent reaction. The polypeptide is Acyl transferase (Shewanella woodyi (strain ATCC 51908 / MS32)).